The primary structure comprises 425 residues: MAFLALGINHKTASVDVRERVAFTPEQLVDALQQLCRLTSSREAAILSTCNRSELYIEQDHLSADAVLQWLADYHRLSLDELRASAYVHEEHDAVKHMMRVASGLDSLVLGEPQILGQMKSAYAVAREAGTVGPLLGRLFQATFSAAKQVRTDTAIGENPVSVAFAAVSLAKQIFADLGRSQALLIGAGETITLVARHLHEQGVRRIVVANRTLERASILAEQFGAHAVLLADIPQELANSDIVISSTASQLPILGKGAVESALKQRRHKPIFMVDIAVPRDIETEVGELDDVYLYTVDDLHDVVAENLKSRQGAAQAAEELVTVGAEDFMLRLRELAAVDVLKAYRQQSERLRDEELQKAQRLLANGGNPEDVLAQLARGLTNKLLHAPSVQLKKLSAEGRVDALAMAQELFALNEGSTDKSPQ.

Residues 49 to 52, serine 107, 112 to 114, and glutamine 118 contribute to the substrate site; these read TCNR and EPQ. Cysteine 50 acts as the Nucleophile in catalysis. An NADP(+)-binding site is contributed by 187–192; that stretch reads GAGETI.

It belongs to the glutamyl-tRNA reductase family. In terms of assembly, homodimer.

The enzyme catalyses (S)-4-amino-5-oxopentanoate + tRNA(Glu) + NADP(+) = L-glutamyl-tRNA(Glu) + NADPH + H(+). Its pathway is porphyrin-containing compound metabolism; protoporphyrin-IX biosynthesis; 5-aminolevulinate from L-glutamyl-tRNA(Glu): step 1/2. Its function is as follows. Catalyzes the NADPH-dependent reduction of glutamyl-tRNA(Glu) to glutamate 1-semialdehyde (GSA). In Pseudomonas putida (strain GB-1), this protein is Glutamyl-tRNA reductase.